A 616-amino-acid polypeptide reads, in one-letter code: MALLQISEPGLSAAPHQRRLAAGIDLGTTNSLVATVRSGQAETLADHEGRHLLPSVVHYQQQGHSVGYDARTNAALDTANTISSVKRLMGRSLADIQQRYPHLPYQFQASENGLPMIETAAGLLNPVRVSADILKALAARATEALAGELDGVVITVPAYFDDAQRQGTKDAARLAGLHVLRLLNEPTAAAIAYGLDSGQEGVIAVYDLGGGTFDISILRLSRGVFEVLATGGDSALGGDDFDHLLADYIREQAGIPDRSDNRVQRELLDAAIAAKIALSYADSVTVNVAGWQGEISREQFNELIAPLVKRTLLACRRALKDAGVEADEVLEVVMVGGSTRVPLVRERVGEFFGRPPLTSIDPDKVVAIGAAIQADILVGNKPDSEMLLLDVIPLSLGLETMGGLVEKVIPRNTTIPVARAQDFTTFKDGQTAMSIHVMQGERELVQDCRSLARFALRGIPALPAGGAHIRVTFQVDADGLLSVTAMEKSTGVEASIQVKPSYGLTDSEIASMIKDSMSYAEQDVKARMLAEQKVEAARVLESLHGALAADAALLSAAERQVIDDAAAHLSEVAQGDDVDAIEQAIKNVDKQTQDFAARRMDQSVRRALKGHSVDEV.

It belongs to the heat shock protein 70 family.

Its function is as follows. Chaperone involved in the maturation of iron-sulfur cluster-containing proteins. Has a low intrinsic ATPase activity which is markedly stimulated by HscB. Involved in the maturation of IscU. The chain is Chaperone protein HscA from Escherichia coli O139:H28 (strain E24377A / ETEC).